The chain runs to 502 residues: T-complex protein 11-like X-linked protein 2 (502 aa).

Positions 1–36 (MPKTEETVLQNDPSVAENGAPEPKTPGQSQKSKSFC) are disordered.

Belongs to the TCP11 family.

The polypeptide is T-complex protein 11-like X-linked protein 2 (Homo sapiens (Human)).